The primary structure comprises 330 residues: Aspartate--ammonia ligase (330 aa).

The protein belongs to the class-II aminoacyl-tRNA synthetase family. AsnA subfamily.

It is found in the cytoplasm. The catalysed reaction is L-aspartate + NH4(+) + ATP = L-asparagine + AMP + diphosphate + H(+). The protein operates within amino-acid biosynthesis; L-asparagine biosynthesis; L-asparagine from L-aspartate (ammonia route): step 1/1. In Escherichia coli O127:H6 (strain E2348/69 / EPEC), this protein is Aspartate--ammonia ligase.